The primary structure comprises 326 residues: Phospho-N-acetylmuramoyl-pentapeptide-transferase (326 aa).

10 helical membrane-spanning segments follow: residues 4–24 (IWVA…LVIP), 49–69 (TPTM…FLLI), 74–94 (GLIV…DDYI), 109–129 (KLLG…FEAG), 151–171 (LGWW…SNAV), 179–199 (GLAA…ALAA), 203–223 (GVAA…FFNF), 228–248 (VFMG…AAVV), 254–274 (LFLI…IQVI), and 303–323 (VVIT…AGLY).

Belongs to the glycosyltransferase 4 family. MraY subfamily. Mg(2+) is required as a cofactor.

The protein resides in the cell membrane. It carries out the reaction UDP-N-acetyl-alpha-D-muramoyl-L-alanyl-gamma-D-glutamyl-meso-2,6-diaminopimeloyl-D-alanyl-D-alanine + di-trans,octa-cis-undecaprenyl phosphate = di-trans,octa-cis-undecaprenyl diphospho-N-acetyl-alpha-D-muramoyl-L-alanyl-D-glutamyl-meso-2,6-diaminopimeloyl-D-alanyl-D-alanine + UMP. The protein operates within cell wall biogenesis; peptidoglycan biosynthesis. Functionally, catalyzes the initial step of the lipid cycle reactions in the biosynthesis of the cell wall peptidoglycan: transfers peptidoglycan precursor phospho-MurNAc-pentapeptide from UDP-MurNAc-pentapeptide onto the lipid carrier undecaprenyl phosphate, yielding undecaprenyl-pyrophosphoryl-MurNAc-pentapeptide, known as lipid I. The chain is Phospho-N-acetylmuramoyl-pentapeptide-transferase from Pelotomaculum thermopropionicum (strain DSM 13744 / JCM 10971 / SI).